Consider the following 63-residue polypeptide: Large ribosomal subunit protein uL29 (63 aa).

The protein belongs to the universal ribosomal protein uL29 family.

The protein is Large ribosomal subunit protein uL29 of Yersinia enterocolitica serotype O:8 / biotype 1B (strain NCTC 13174 / 8081).